We begin with the raw amino-acid sequence, 226 residues long: 3-dehydroquinate dehydratase (226 aa).

3-dehydroquinate is bound by residues 33–35 (EWR) and Arg65. His121 (proton donor/acceptor) is an active-site residue. The active-site Schiff-base intermediate with substrate is Lys146. Positions 188, 207, and 211 each coordinate 3-dehydroquinate.

Belongs to the type-I 3-dehydroquinase family. In terms of assembly, homodimer.

It carries out the reaction 3-dehydroquinate = 3-dehydroshikimate + H2O. The protein operates within metabolic intermediate biosynthesis; chorismate biosynthesis; chorismate from D-erythrose 4-phosphate and phosphoenolpyruvate: step 3/7. Involved in the third step of the chorismate pathway, which leads to the biosynthesis of aromatic amino acids. Catalyzes the cis-dehydration of 3-dehydroquinate (DHQ) and introduces the first double bond of the aromatic ring to yield 3-dehydroshikimate. The polypeptide is 3-dehydroquinate dehydratase (Lactococcus lactis subsp. lactis (strain IL1403) (Streptococcus lactis)).